The primary structure comprises 227 residues: Enolase-phosphatase E1 (227 aa).

It belongs to the HAD-like hydrolase superfamily. MasA/MtnC family. Monomer. Requires Mg(2+) as cofactor.

The catalysed reaction is 5-methylsulfanyl-2,3-dioxopentyl phosphate + H2O = 1,2-dihydroxy-5-(methylsulfanyl)pent-1-en-3-one + phosphate. It functions in the pathway amino-acid biosynthesis; L-methionine biosynthesis via salvage pathway; L-methionine from S-methyl-5-thio-alpha-D-ribose 1-phosphate: step 3/6. Its pathway is amino-acid biosynthesis; L-methionine biosynthesis via salvage pathway; L-methionine from S-methyl-5-thio-alpha-D-ribose 1-phosphate: step 4/6. Functionally, bifunctional enzyme that catalyzes the enolization of 2,3-diketo-5-methylthiopentyl-1-phosphate (DK-MTP-1-P) into the intermediate 2-hydroxy-3-keto-5-methylthiopentenyl-1-phosphate (HK-MTPenyl-1-P), which is then dephosphorylated to form the acireductone 1,2-dihydroxy-3-keto-5-methylthiopentene (DHK-MTPene). This chain is Enolase-phosphatase E1, found in Methylococcus capsulatus (strain ATCC 33009 / NCIMB 11132 / Bath).